The chain runs to 92 residues: Small ribosomal subunit protein uS19 (92 aa).

This sequence belongs to the universal ribosomal protein uS19 family.

Functionally, protein S19 forms a complex with S13 that binds strongly to the 16S ribosomal RNA. The chain is Small ribosomal subunit protein uS19 from Picosynechococcus sp. (strain ATCC 27264 / PCC 7002 / PR-6) (Agmenellum quadruplicatum).